Reading from the N-terminus, the 540-residue chain is CTP synthase (540 aa).

The amidoligase domain stretch occupies residues 1–270 (MNNLTSTKFI…DTQILKHFNI (270 aa)). Ser18 contacts CTP. UTP is bound at residue Ser18. ATP-binding positions include 19–24 (SLGKGL) and Asp76. Residues Asp76 and Glu144 each contribute to the Mg(2+) site. Residues 151-153 (DIE), 191-196 (KTKPTQ), and Lys227 contribute to the CTP site. UTP-binding positions include 191–196 (KTKPTQ) and Lys227. The Glutamine amidotransferase type-1 domain occupies 295-537 (TIAIIGKYIK…VQASLNYQET (243 aa)). Residue Gly356 participates in L-glutamine binding. Cys383 (nucleophile; for glutamine hydrolysis) is an active-site residue. Residues 384–387 (MGMQ), Glu407, and Arg462 contribute to the L-glutamine site. Active-site residues include His510 and Glu512.

Belongs to the CTP synthase family. Homotetramer.

It catalyses the reaction UTP + L-glutamine + ATP + H2O = CTP + L-glutamate + ADP + phosphate + 2 H(+). The catalysed reaction is L-glutamine + H2O = L-glutamate + NH4(+). It carries out the reaction UTP + NH4(+) + ATP = CTP + ADP + phosphate + 2 H(+). The protein operates within pyrimidine metabolism; CTP biosynthesis via de novo pathway; CTP from UDP: step 2/2. Allosterically activated by GTP, when glutamine is the substrate; GTP has no effect on the reaction when ammonia is the substrate. The allosteric effector GTP functions by stabilizing the protein conformation that binds the tetrahedral intermediate(s) formed during glutamine hydrolysis. Inhibited by the product CTP, via allosteric rather than competitive inhibition. Functionally, catalyzes the ATP-dependent amination of UTP to CTP with either L-glutamine or ammonia as the source of nitrogen. Regulates intracellular CTP levels through interactions with the four ribonucleotide triphosphates. The protein is CTP synthase of Ehrlichia ruminantium (strain Welgevonden).